The chain runs to 473 residues: Photosystem II CP43 reaction center protein (473 aa).

The propeptide occupies 1–14 (MKILYSLRRFYHVE). Residue Thr-15 is modified to N-acetylthreonine. Residue Thr-15 is modified to Phosphothreonine. Transmembrane regions (helical) follow at residues 69–93 (LFEVAHFVPEKPMYEQGLILLPHLA), 134–155 (LLGPETLEESFPFFGYVWKDRN), 178–200 (KALYFGGVYDTWAPGGGDVRKIT), 255–275 (KPFAWARRAFVWSGEAYLSYS), and 291–312 (WFNNTAYSSEFYGPTGPEASQA). Residue Glu-367 participates in [CaMn4O5] cluster binding. The chain crosses the membrane as a helical span at residues 447-471 (RARAAAAGFEKGIDRDLEPVLYMNP).

The protein belongs to the PsbB/PsbC family. PsbC subfamily. As to quaternary structure, PSII is composed of 1 copy each of membrane proteins PsbA, PsbB, PsbC, PsbD, PsbE, PsbF, PsbH, PsbI, PsbJ, PsbK, PsbL, PsbM, PsbT, PsbX, PsbY, PsbZ, Psb30/Ycf12, at least 3 peripheral proteins of the oxygen-evolving complex and a large number of cofactors. It forms dimeric complexes. Binds multiple chlorophylls and provides some of the ligands for the Ca-4Mn-5O cluster of the oxygen-evolving complex. It may also provide a ligand for a Cl- that is required for oxygen evolution. PSII binds additional chlorophylls, carotenoids and specific lipids. is required as a cofactor. Post-translationally, phosphorylated on threonine residue(s); phosphorylation increases with increasing light levels.

Its subcellular location is the plastid. It is found in the chloroplast thylakoid membrane. In terms of biological role, one of the components of the core complex of photosystem II (PSII). It binds chlorophyll and helps catalyze the primary light-induced photochemical processes of PSII. PSII is a light-driven water:plastoquinone oxidoreductase, using light energy to abstract electrons from H(2)O, generating O(2) and a proton gradient subsequently used for ATP formation. This Secale cereale (Rye) protein is Photosystem II CP43 reaction center protein.